The sequence spans 194 residues: Fe/S biogenesis protein NfuA (194 aa).

Positions 151 and 154 each coordinate [4Fe-4S] cluster.

The protein belongs to the NfuA family. Homodimer. Requires [4Fe-4S] cluster as cofactor.

Involved in iron-sulfur cluster biogenesis. Binds a 4Fe-4S cluster, can transfer this cluster to apoproteins, and thereby intervenes in the maturation of Fe/S proteins. Could also act as a scaffold/chaperone for damaged Fe/S proteins. The polypeptide is Fe/S biogenesis protein NfuA (Aliivibrio salmonicida (strain LFI1238) (Vibrio salmonicida (strain LFI1238))).